A 402-amino-acid chain; its full sequence is Acetylornithine aminotransferase (402 aa).

Pyridoxal 5'-phosphate is bound by residues 106 to 107 and Phe-132; that span reads GA. Residue Arg-135 participates in N(2)-acetyl-L-ornithine binding. 217–220 contributes to the pyridoxal 5'-phosphate binding site; it reads DEVQ. Lys-247 is subject to N6-(pyridoxal phosphate)lysine. Thr-275 provides a ligand contact to N(2)-acetyl-L-ornithine. Thr-276 serves as a coordination point for pyridoxal 5'-phosphate.

This sequence belongs to the class-III pyridoxal-phosphate-dependent aminotransferase family. ArgD subfamily. In terms of assembly, homodimer. The cofactor is pyridoxal 5'-phosphate.

It localises to the cytoplasm. The enzyme catalyses N(2)-acetyl-L-ornithine + 2-oxoglutarate = N-acetyl-L-glutamate 5-semialdehyde + L-glutamate. It functions in the pathway amino-acid biosynthesis; L-arginine biosynthesis; N(2)-acetyl-L-ornithine from L-glutamate: step 4/4. This Streptomyces coelicolor (strain ATCC BAA-471 / A3(2) / M145) protein is Acetylornithine aminotransferase.